Here is a 451-residue protein sequence, read N- to C-terminus: Signal recognition particle 54 kDa protein (451 aa).

Residues 105 to 112, 187 to 191, and 247 to 250 each bind GTP; these read GVQGTGKT, DTAGR, and TKMD.

It belongs to the GTP-binding SRP family. SRP54 subfamily. In terms of assembly, part of the signal recognition particle protein translocation system, which is composed of SRP and FtsY. Archaeal SRP consists of a 7S RNA molecule of 300 nucleotides and two protein subunits: SRP54 and SRP19.

Its subcellular location is the cytoplasm. The enzyme catalyses GTP + H2O = GDP + phosphate + H(+). In terms of biological role, involved in targeting and insertion of nascent membrane proteins into the cytoplasmic membrane. Binds to the hydrophobic signal sequence of the ribosome-nascent chain (RNC) as it emerges from the ribosomes. The SRP-RNC complex is then targeted to the cytoplasmic membrane where it interacts with the SRP receptor FtsY. The sequence is that of Signal recognition particle 54 kDa protein from Acidianus ambivalens (Desulfurolobus ambivalens).